Consider the following 131-residue polypeptide: uncharacterized protein (131 aa).

This is an uncharacterized protein from Archaeoglobus fulgidus (strain ATCC 49558 / DSM 4304 / JCM 9628 / NBRC 100126 / VC-16).